A 219-amino-acid chain; its full sequence is 16S rRNA (adenine(1408)-N(1))-methyltransferase (219 aa).

Residues Gly32, Asn38, Asp55, 87 to 88 (AE), 104 to 109 (LFPWGT), and 195 to 197 (SLW) contribute to the S-adenosyl-L-methionine site.

The protein belongs to the methyltransferase superfamily. Kanamycin-apramycin resistance family.

The catalysed reaction is adenosine(1408) in 16S rRNA + S-adenosyl-L-methionine = N(1)-methyladenosine(1408) in 16S rRNA + S-adenosyl-L-homocysteine + H(+). Functionally, specifically methylates the N(1) position of adenine 1408 in 16S rRNA. Confers resistance to various aminoglycosides, including kanamycin, neomycin, apramycin, ribostamycin and gentamicin. Methylates only fully assembled 30S subunits. The chain is 16S rRNA (adenine(1408)-N(1))-methyltransferase (npmA) from Escherichia coli.